The sequence spans 225 residues: NAD(P)H-quinone oxidoreductase subunit K, chloroplastic (225 aa).

C43, C44, C108, and C139 together coordinate [4Fe-4S] cluster.

This sequence belongs to the complex I 20 kDa subunit family. As to quaternary structure, NDH is composed of at least 16 different subunits, 5 of which are encoded in the nucleus. It depends on [4Fe-4S] cluster as a cofactor.

The protein resides in the plastid. It is found in the chloroplast thylakoid membrane. It catalyses the reaction a plastoquinone + NADH + (n+1) H(+)(in) = a plastoquinol + NAD(+) + n H(+)(out). The enzyme catalyses a plastoquinone + NADPH + (n+1) H(+)(in) = a plastoquinol + NADP(+) + n H(+)(out). Its function is as follows. NDH shuttles electrons from NAD(P)H:plastoquinone, via FMN and iron-sulfur (Fe-S) centers, to quinones in the photosynthetic chain and possibly in a chloroplast respiratory chain. The immediate electron acceptor for the enzyme in this species is believed to be plastoquinone. Couples the redox reaction to proton translocation, and thus conserves the redox energy in a proton gradient. The sequence is that of NAD(P)H-quinone oxidoreductase subunit K, chloroplastic from Crucihimalaya wallichii (Rock-cress).